A 106-amino-acid polypeptide reads, in one-letter code: MAEIRKGDTVKVIAGKEKGKTGRVLEVLREDGRVRVEKLMTVKRHQKKGRSQANPEGGILELPGTIAISSVMVVGKDDKPVRREKIGRELGAKEKARLQKRKAAAK.

Positions Glu-84 to Arg-97 are enriched in basic and acidic residues. The disordered stretch occupies residues Glu-84–Lys-106.

This sequence belongs to the universal ribosomal protein uL24 family. Part of the 50S ribosomal subunit.

In terms of biological role, one of two assembly initiator proteins, it binds directly to the 5'-end of the 23S rRNA, where it nucleates assembly of the 50S subunit. One of the proteins that surrounds the polypeptide exit tunnel on the outside of the subunit. This chain is Large ribosomal subunit protein uL24, found in Anaeromyxobacter dehalogenans (strain 2CP-C).